The following is a 491-amino-acid chain: Nicotinamide phosphoribosyltransferase (491 aa).

Methionine 1 carries the post-translational modification N-acetylmethionine. Residue tyrosine 188 is modified to Phosphotyrosine. Arginine 196 contacts diphosphate. Aspartate 219 is a beta-nicotinamide D-ribonucleotide binding site. Residues histidine 247 and arginine 311 each coordinate diphosphate. Residues arginine 311–aspartate 313, glycine 353–aspartate 354, glycine 384, and arginine 392 contribute to the beta-nicotinamide D-ribonucleotide site. Residue serine 472 is modified to Phosphoserine.

The protein belongs to the NAPRTase family. Homodimer.

Its subcellular location is the nucleus. The protein localises to the cytoplasm. It is found in the secreted. It carries out the reaction beta-nicotinamide D-ribonucleotide + diphosphate = 5-phospho-alpha-D-ribose 1-diphosphate + nicotinamide + H(+). It functions in the pathway cofactor biosynthesis; NAD(+) biosynthesis; nicotinamide D-ribonucleotide from 5-phospho-alpha-D-ribose 1-diphosphate and nicotinamide: step 1/1. Its function is as follows. Catalyzes the condensation of nicotinamide with 5-phosphoribosyl-1-pyrophosphate to yield nicotinamide mononucleotide, an intermediate in the biosynthesis of NAD. It is the rate limiting component in the mammalian NAD biosynthesis pathway. The secreted form behaves both as a cytokine with immunomodulating properties and an adipokine with anti-diabetic properties, it has no enzymatic activity, partly because of lack of activation by ATP, which has a low level in extracellular space and plasma. Plays a role in the modulation of circadian clock function. Plays a role in the modulation of circadian clock function. NAMPT-dependent oscillatory production of NAD regulates oscillation of clock target gene expression by releasing the core clock component: CLOCK-BMAL1 heterodimer from NAD-dependent SIRT1-mediated suppression. The polypeptide is Nicotinamide phosphoribosyltransferase (NAMPT) (Sus scrofa (Pig)).